The sequence spans 570 residues: MGDNLVYAVRSSEGFYLKRGLGKDAVTVFEQNKTSRDVACNVFAYSNNGQLFAYCDNQVTRVFEIATNKEILCVELKRTRKILFSPKDNFLLTFEPWAVYGPKTAENQKPEPNVRVYSLADGKHVSTFSAPKEASWEPQFSDDESLAARMVGSEVFFYTNMSFDRYDHKLVEKGATNFALSPGPAPNHVAVYVPAVGSTPARVRVHRVSESFPVVGNRTFFKSDKAVMTWNQRGQSLLILASVEVDKTNQSYYGEQSLYLINIQSGESVVVPLEKKGPIYAAKWNPNGREFAVCYGYMPAKVTFYNPRGVPIFDTIEGPRNDVFYNAFGNIVLICGFGNIAKGKMEFWDVETKKEIISIEVPNTTLFDWAPDGQHFVTCTTAPRLRIDNSYRFWHYTGRMLAETHFESPKELWEVRWRPMTGYNKFAIKELTKTDKMAAGLPIRKKDASHPLNNVPAGAVRQAGAYIPPHLRKPLGGGGSAGPPSAAAPTPGNQNQRPAQPRANGNGNAPQPFRPQQSEQERKAFQLKKKVEEIKVLKQRVANGDQLQPNQMEKIQRENEYLSELSKLTI.

WD repeat units follow at residues 274–316 and 318–358; these read EKKG…FDTI and GPRN…EIIS. Positions 468 to 526 are disordered; that stretch reads PPHLRKPLGGGGSAGPPSAAAPTPGNQNQRPAQPRANGNGNAPQPFRPQQSEQERKAFQ. Positions 482-492 are enriched in low complexity; it reads GPPSAAAPTPG. Polar residues predominate over residues 493 to 518; it reads NQNQRPAQPRANGNGNAPQPFRPQQS. Residues 519–541 are a coiled coil; the sequence is EQERKAFQLKKKVEEIKVLKQRV.

Belongs to the WD repeat EIF2A family.

Its function is as follows. Functions in the early steps of protein synthesis of a small number of specific mRNAs. Acts by directing the binding of methionyl-tRNAi to 40S ribosomal subunits. In contrast to the eIF-2 complex, it binds methionyl-tRNAi to 40S subunits in a codon-dependent manner, whereas the eIF-2 complex binds methionyl-tRNAi to 40S subunits in a GTP-dependent manner. This Caenorhabditis elegans protein is Eukaryotic translation initiation factor 2A.